Consider the following 82-residue polypeptide: MEVKPLANIKSAIKRAELNVKQNEKNSAQKSAMRTAIKAFEANPSEELFRAASSAIDKAETKGLIHKNKASRDKARLASKLA.

The protein belongs to the bacterial ribosomal protein bS20 family.

Its function is as follows. Binds directly to 16S ribosomal RNA. The protein is Small ribosomal subunit protein bS20 of Streptococcus suis (strain 98HAH33).